The sequence spans 136 residues: Large-conductance mechanosensitive channel (136 aa).

Helical transmembrane passes span 10–30 and 76–96; these read FAMR…AAFG and GSFI…FSAV.

The protein belongs to the MscL family. In terms of assembly, homopentamer.

The protein localises to the cell inner membrane. Its function is as follows. Channel that opens in response to stretch forces in the membrane lipid bilayer. May participate in the regulation of osmotic pressure changes within the cell. This Yersinia enterocolitica serotype O:8 / biotype 1B (strain NCTC 13174 / 8081) protein is Large-conductance mechanosensitive channel.